A 205-amino-acid chain; its full sequence is Urease accessory protein UreG (205 aa).

Residue G12–T19 participates in GTP binding.

The protein belongs to the SIMIBI class G3E GTPase family. UreG subfamily. In terms of assembly, homodimer. UreD, UreF and UreG form a complex that acts as a GTP-hydrolysis-dependent molecular chaperone, activating the urease apoprotein by helping to assemble the nickel containing metallocenter of UreC. The UreE protein probably delivers the nickel.

It localises to the cytoplasm. Facilitates the functional incorporation of the urease nickel metallocenter. This process requires GTP hydrolysis, probably effectuated by UreG. This chain is Urease accessory protein UreG, found in Pseudomonas savastanoi pv. phaseolicola (strain 1448A / Race 6) (Pseudomonas syringae pv. phaseolicola (strain 1448A / Race 6)).